We begin with the raw amino-acid sequence, 128 residues long: Flagellar basal body rod protein FlgB (128 aa).

This sequence belongs to the flagella basal body rod proteins family. In terms of assembly, the basal body constitutes a major portion of the flagellar organelle and consists of a number of rings mounted on a central rod. In Gram-negative bacteria, at least four rings, L, P, S and M are present, whereas Gram-positive bacteria lack the L and P rings. The rod consists of about 26 subunits of FlgG in the distal portion, and FlgB, FlgC and FlgF build up the proximal portion of the rod with about 6 subunits each. Rod assembly occurs by export via the flagellum-specific pathway of its constituent proteins and by their incorporation into the rod structure in the probable order of FlgB, FlgC, FlgF and FlgG. Another protein, FliE, also assembles onto the stable rod structure.

The protein localises to the bacterial flagellum basal body. Its function is as follows. Structural component of flagellum, the bacterial motility apparatus. Part of the rod structure of flagellar basal body. The chain is Flagellar basal body rod protein FlgB from Cereibacter sphaeroides (strain ATCC 17023 / DSM 158 / JCM 6121 / CCUG 31486 / LMG 2827 / NBRC 12203 / NCIMB 8253 / ATH 2.4.1.) (Rhodobacter sphaeroides).